The following is a 473-amino-acid chain: ATP synthase subunit beta (473 aa).

158–165 (GGAGVGKT) is an ATP binding site.

It belongs to the ATPase alpha/beta chains family. As to quaternary structure, F-type ATPases have 2 components, CF(1) - the catalytic core - and CF(0) - the membrane proton channel. CF(1) has five subunits: alpha(3), beta(3), gamma(1), delta(1), epsilon(1). CF(0) has three main subunits: a(1), b(2) and c(9-12). The alpha and beta chains form an alternating ring which encloses part of the gamma chain. CF(1) is attached to CF(0) by a central stalk formed by the gamma and epsilon chains, while a peripheral stalk is formed by the delta and b chains.

It is found in the cell membrane. The catalysed reaction is ATP + H2O + 4 H(+)(in) = ADP + phosphate + 5 H(+)(out). Its function is as follows. Produces ATP from ADP in the presence of a proton gradient across the membrane. The catalytic sites are hosted primarily by the beta subunits. This is ATP synthase subunit beta from Geobacillus kaustophilus (strain HTA426).